Reading from the N-terminus, the 265-residue chain is Mlc titration factor A (265 aa).

4 residues coordinate Zn(2+): histidine 111, histidine 148, histidine 152, and glutamate 211.

Belongs to the MtfA family. As to quaternary structure, interacts with Mlc. Requires Zn(2+) as cofactor.

It localises to the cytoplasm. Its function is as follows. Involved in the modulation of the activity of the glucose-phosphotransferase system (glucose-PTS). Interacts with the transcriptional repressor Mlc, preventing its interaction with DNA and leading to the modulation of expression of genes regulated by Mlc, including ptsG, which encodes the PTS system glucose-specific EIICB component. Functionally, shows zinc-dependent metallopeptidase activity. In Shigella sonnei (strain Ss046), this protein is Mlc titration factor A.